The primary structure comprises 376 residues: Alanine racemase (376 aa).

Residue K36 is the Proton acceptor; specific for D-alanine of the active site. An N6-(pyridoxal phosphate)lysine modification is found at K36. R134 contributes to the substrate binding site. Y266 acts as the Proton acceptor; specific for L-alanine in catalysis. Substrate is bound at residue M314.

The protein belongs to the alanine racemase family. The cofactor is pyridoxal 5'-phosphate.

It catalyses the reaction L-alanine = D-alanine. It functions in the pathway amino-acid biosynthesis; D-alanine biosynthesis; D-alanine from L-alanine: step 1/1. Catalyzes the interconversion of L-alanine and D-alanine. May also act on other amino acids. The sequence is that of Alanine racemase (alr) from Nitratidesulfovibrio vulgaris (strain DP4) (Desulfovibrio vulgaris).